The sequence spans 469 residues: Serine hydroxymethyltransferase, cytosolic (469 aa).

The residue at position 20 (Thr-20) is a Phosphothreonine. Ser-26 is modified (phosphoserine). Lys-248 is subject to N6-(pyridoxal phosphate)lysine. Phosphoserine is present on Ser-429. A Glycyl lysine isopeptide (Lys-Gly) (interchain with G-Cter in ubiquitin) cross-link involves residue Lys-456.

Belongs to the SHMT family. As to quaternary structure, homotetramer. Requires pyridoxal 5'-phosphate as cofactor.

It is found in the cytoplasm. The catalysed reaction is (6R)-5,10-methylene-5,6,7,8-tetrahydrofolate + glycine + H2O = (6S)-5,6,7,8-tetrahydrofolate + L-serine. The protein operates within one-carbon metabolism; tetrahydrofolate interconversion. Interconversion of serine and glycine. This is Serine hydroxymethyltransferase, cytosolic from Saccharomyces cerevisiae (strain ATCC 204508 / S288c) (Baker's yeast).